A 74-amino-acid polypeptide reads, in one-letter code: U6-agatoxin-Ao1a (74 aa).

The signal sequence occupies residues 1 to 19; that stretch reads MRFYIAFFFLLLAADMALS. The propeptide occupies 20-30; the sequence is FEIGNSEELER. Disulfide bonds link Cys44–Cys56, Cys49–Cys61, and Cys55–Cys72.

Expressed by the venom gland.

The protein resides in the secreted. The sequence is that of U6-agatoxin-Ao1a from Agelena orientalis (Funnel-web spider).